Here is a 342-residue protein sequence, read N- to C-terminus: Foldase protein PrsA (342 aa).

A signal peptide spans 1–22 (MVSVKKIVASALVGVLMFSAVG). Cys23 carries N-palmitoyl cysteine lipidation. Residue Cys23 is the site of S-diacylglycerol cysteine attachment. In terms of domain architecture, PpiC spans 189 to 284 (DSGVLTKHLL…FGYHIIQAGA (96 aa)).

This sequence belongs to the PrsA family.

It is found in the cell membrane. The enzyme catalyses [protein]-peptidylproline (omega=180) = [protein]-peptidylproline (omega=0). In terms of biological role, plays a major role in protein secretion by helping the post-translocational extracellular folding of several secreted proteins. The sequence is that of Foldase protein PrsA from Clostridium perfringens (strain 13 / Type A).